A 295-amino-acid polypeptide reads, in one-letter code: Ectoine dioxygenase (295 aa).

Glutamine 129 contacts L-ectoine. Position 135 (lysine 135) interacts with 2-oxoglutarate. Fe cation contacts are provided by histidine 146, aspartate 148, and histidine 247.

It belongs to the PhyH family. EctD subfamily. In terms of assembly, homodimer. It depends on Fe(2+) as a cofactor.

The catalysed reaction is L-ectoine + 2-oxoglutarate + O2 = 5-hydroxyectoine + succinate + CO2. Functionally, involved in the biosynthesis of 5-hydroxyectoine, called compatible solute, which helps organisms to survive extreme osmotic stress by acting as a highly soluble organic osmolyte. Catalyzes the 2-oxoglutarate-dependent selective hydroxylation of L-ectoine to yield (4S,5S)-5-hydroxyectoine. The protein is Ectoine dioxygenase of Streptomyces avermitilis (strain ATCC 31267 / DSM 46492 / JCM 5070 / NBRC 14893 / NCIMB 12804 / NRRL 8165 / MA-4680).